Consider the following 92-residue polypeptide: Large ribosomal subunit protein eL31 (92 aa).

S2 carries the post-translational modification N-acetylserine.

Belongs to the eukaryotic ribosomal protein eL31 family. In terms of assembly, part of the 50S ribosomal subunit.

In terms of biological role, binds to the 23S rRNA. Located at the polypeptide exit tunnel on the outside of the subunit. This Haloarcula marismortui (strain ATCC 43049 / DSM 3752 / JCM 8966 / VKM B-1809) (Halobacterium marismortui) protein is Large ribosomal subunit protein eL31 (rpl31e).